Here is a 219-residue protein sequence, read N- to C-terminus: 7-carboxy-7-deazaguanine synthase (219 aa).

Substrate contacts are provided by residues 22–24 (IQG) and R37. Residues 28–219 (LVGLPSVFIR…PQVHKCFDLK (192 aa)) form the Radical SAM core domain. [4Fe-4S] cluster contacts are provided by C41, C45, and C48. T81 contributes to the substrate binding site. S-adenosyl-L-methionine contacts are provided by residues G83 and 130-132 (SPK).

This sequence belongs to the radical SAM superfamily. 7-carboxy-7-deazaguanine synthase family. Homodimer. The cofactor is [4Fe-4S] cluster. It depends on S-adenosyl-L-methionine as a cofactor. Mg(2+) is required as a cofactor.

It carries out the reaction 6-carboxy-5,6,7,8-tetrahydropterin + H(+) = 7-carboxy-7-deazaguanine + NH4(+). It participates in purine metabolism; 7-cyano-7-deazaguanine biosynthesis. Its function is as follows. Catalyzes the complex heterocyclic radical-mediated conversion of 6-carboxy-5,6,7,8-tetrahydropterin (CPH4) to 7-carboxy-7-deazaguanine (CDG), a step common to the biosynthetic pathways of all 7-deazapurine-containing compounds. The polypeptide is 7-carboxy-7-deazaguanine synthase (Aquifex aeolicus (strain VF5)).